Consider the following 381-residue polypeptide: tRNA pseudouridine synthase D (381 aa).

Residue D81 is the Nucleophile of the active site. Residues 160–335 enclose the TRUD domain; that stretch reads GMPNYFGSQR…TLGSRRFFWV (176 aa).

It belongs to the pseudouridine synthase TruD family.

It catalyses the reaction uridine(13) in tRNA = pseudouridine(13) in tRNA. In terms of biological role, responsible for synthesis of pseudouridine from uracil-13 in transfer RNAs. In Helicobacter pylori (strain ATCC 700392 / 26695) (Campylobacter pylori), this protein is tRNA pseudouridine synthase D.